We begin with the raw amino-acid sequence, 183 residues long: NADH-ubiquinone oxidoreductase 20.8 kDa subunit (183 aa).

2 consecutive CHCH domains span residues 44-87 (GARC…IADI) and 88-130 (NKSC…LGLK). 4 consecutive short sequence motifs (cx9C motif) follow at residues 47–57 (CRDYNDDFMQC), 69–79 (CLKEGRRVTRC), 91–101 (CLEEFRKHWTC), and 112–122 (CRPAEWKLNKC). Cystine bridges form between cysteine 47–cysteine 79, cysteine 57–cysteine 69, cysteine 91–cysteine 122, and cysteine 101–cysteine 112. Residues 161–183 (EPFVPPTQTGDNNKAPAAASSSS) form a disordered region.

The protein belongs to the complex I NDUFA8 subunit family. Complex I is composed of about 40 different subunits. This is a component of the hydrophobic fraction. Iron-sulfur cluster serves as cofactor.

It localises to the mitochondrion inner membrane. Its function is as follows. Accessory subunit of the mitochondrial membrane respiratory chain NADH dehydrogenase (Complex I), that is believed not to be involved in catalysis. Complex I functions in the transfer of electrons from NADH to the respiratory chain. The immediate electron acceptor for the enzyme is believed to be ubiquinone. This is NADH-ubiquinone oxidoreductase 20.8 kDa subunit from Neurospora crassa (strain ATCC 24698 / 74-OR23-1A / CBS 708.71 / DSM 1257 / FGSC 987).